The primary structure comprises 185 residues: RRM domain-containing protein ECU09_1470 (185 aa).

RRM domains follow at residues 8–87 and 101–170; these read NQLA…YAKR and KKVY…PAYE.

The polypeptide is RRM domain-containing protein ECU09_1470 (Encephalitozoon cuniculi (strain GB-M1) (Microsporidian parasite)).